The primary structure comprises 580 residues: Proline--tRNA ligase (580 aa).

It belongs to the class-II aminoacyl-tRNA synthetase family. ProS type 1 subfamily. As to quaternary structure, homodimer.

The protein resides in the cytoplasm. The enzyme catalyses tRNA(Pro) + L-proline + ATP = L-prolyl-tRNA(Pro) + AMP + diphosphate. Functionally, catalyzes the attachment of proline to tRNA(Pro) in a two-step reaction: proline is first activated by ATP to form Pro-AMP and then transferred to the acceptor end of tRNA(Pro). As ProRS can inadvertently accommodate and process non-cognate amino acids such as alanine and cysteine, to avoid such errors it has two additional distinct editing activities against alanine. One activity is designated as 'pretransfer' editing and involves the tRNA(Pro)-independent hydrolysis of activated Ala-AMP. The other activity is designated 'posttransfer' editing and involves deacylation of mischarged Ala-tRNA(Pro). The misacylated Cys-tRNA(Pro) is not edited by ProRS. This Albidiferax ferrireducens (strain ATCC BAA-621 / DSM 15236 / T118) (Rhodoferax ferrireducens) protein is Proline--tRNA ligase.